The primary structure comprises 276 residues: 3-methyl-2-oxobutanoate hydroxymethyltransferase (276 aa).

Positions 49 and 88 each coordinate Mg(2+). 3-methyl-2-oxobutanoate is bound by residues 49 to 50 (DS), Asp88, and Lys118. Glu120 provides a ligand contact to Mg(2+). The active-site Proton acceptor is Glu187.

It belongs to the PanB family. Homodecamer; pentamer of dimers. Mg(2+) serves as cofactor.

It localises to the cytoplasm. It carries out the reaction 3-methyl-2-oxobutanoate + (6R)-5,10-methylene-5,6,7,8-tetrahydrofolate + H2O = 2-dehydropantoate + (6S)-5,6,7,8-tetrahydrofolate. It participates in cofactor biosynthesis; (R)-pantothenate biosynthesis; (R)-pantoate from 3-methyl-2-oxobutanoate: step 1/2. Its function is as follows. Catalyzes the reversible reaction in which hydroxymethyl group from 5,10-methylenetetrahydrofolate is transferred onto alpha-ketoisovalerate to form ketopantoate. This Afipia carboxidovorans (strain ATCC 49405 / DSM 1227 / KCTC 32145 / OM5) (Oligotropha carboxidovorans) protein is 3-methyl-2-oxobutanoate hydroxymethyltransferase.